The sequence spans 309 residues: Ornithine carbamoyltransferase (309 aa).

Carbamoyl phosphate contacts are provided by residues 56–59, Gln83, Arg107, and 134–137; these read STRT and HPCQ. L-ornithine-binding positions include Asn165, Asp223, and 227–228; that span reads SM. Carbamoyl phosphate-binding positions include 263-264 and Arg291; that span reads CL.

The protein belongs to the aspartate/ornithine carbamoyltransferase superfamily. OTCase family.

Its subcellular location is the cytoplasm. The catalysed reaction is carbamoyl phosphate + L-ornithine = L-citrulline + phosphate + H(+). It functions in the pathway amino-acid biosynthesis; L-arginine biosynthesis; L-arginine from L-ornithine and carbamoyl phosphate: step 1/3. Its function is as follows. Reversibly catalyzes the transfer of the carbamoyl group from carbamoyl phosphate (CP) to the N(epsilon) atom of ornithine (ORN) to produce L-citrulline. This Burkholderia lata (strain ATCC 17760 / DSM 23089 / LMG 22485 / NCIMB 9086 / R18194 / 383) protein is Ornithine carbamoyltransferase.